The primary structure comprises 62 residues: DNA-directed RNA polymerase subunit Rpo10 (62 aa).

Residues Cys6, Cys9, Cys43, and Cys44 each coordinate Zn(2+).

The protein belongs to the archaeal Rpo10/eukaryotic RPB10 RNA polymerase subunit family. In terms of assembly, part of the RNA polymerase complex. Zn(2+) is required as a cofactor.

The protein resides in the cytoplasm. The enzyme catalyses RNA(n) + a ribonucleoside 5'-triphosphate = RNA(n+1) + diphosphate. DNA-dependent RNA polymerase (RNAP) catalyzes the transcription of DNA into RNA using the four ribonucleoside triphosphates as substrates. This Methanocorpusculum labreanum (strain ATCC 43576 / DSM 4855 / Z) protein is DNA-directed RNA polymerase subunit Rpo10.